Consider the following 184-residue polypeptide: MEGSEEHGETSKAPLSRGVSKGVSILDVILRFVAIIGTLASAIAMGTTNQTLPFFTQFIRFKAQYSDLPTLTFFVVANSIVSAYLILSLPLSIVHVIRSRAKYSRLILIFFDAAMLALVTAGASAAAAIVYLAHKGNARANWLAICQQFDSFCERISGSLIGSFAAMVVLVLLIFLSAIALARR.

At 1–24 (MEGSEEHGETSKAPLSRGVSKGVS) the chain is on the cytoplasmic side. The helical transmembrane segment at 25 to 45 (ILDVILRFVAIIGTLASAIAM) threads the bilayer. Topologically, residues 46–72 (GTTNQTLPFFTQFIRFKAQYSDLPTLT) are extracellular. An N-linked (GlcNAc...) asparagine glycan is attached at Asn-49. The chain crosses the membrane as a helical span at residues 73 to 93 (FFVVANSIVSAYLILSLPLSI). Over 94 to 105 (VHVIRSRAKYSR) the chain is Cytoplasmic. Residues 106-126 (LILIFFDAAMLALVTAGASAA) form a helical membrane-spanning segment. The Extracellular segment spans residues 127 to 159 (AAIVYLAHKGNARANWLAICQQFDSFCERISGS). The chain crosses the membrane as a helical span at residues 160–180 (LIGSFAAMVVLVLLIFLSAIA). The Cytoplasmic segment spans residues 181–184 (LARR).

This sequence belongs to the Casparian strip membrane proteins (CASP) family. In terms of assembly, homodimer and heterodimers.

It localises to the cell membrane. In terms of biological role, regulates membrane-cell wall junctions and localized cell wall deposition. Required for establishment of the Casparian strip membrane domain (CSD) and the subsequent formation of Casparian strips, a cell wall modification of the root endodermis that determines an apoplastic barrier between the intraorganismal apoplasm and the extraorganismal apoplasm and prevents lateral diffusion. In Oryza sativa subsp. indica (Rice), this protein is Casparian strip membrane protein 3.